A 368-amino-acid polypeptide reads, in one-letter code: UDP-N-acetylglucosamine--N-acetylmuramyl-(pentapeptide) pyrophosphoryl-undecaprenol N-acetylglucosamine transferase (368 aa).

UDP-N-acetyl-alpha-D-glucosamine contacts are provided by residues 14–16 (TGG), asparagine 125, arginine 168, serine 196, and glutamine 297.

This sequence belongs to the glycosyltransferase 28 family. MurG subfamily.

The protein localises to the cell inner membrane. The catalysed reaction is di-trans,octa-cis-undecaprenyl diphospho-N-acetyl-alpha-D-muramoyl-L-alanyl-D-glutamyl-meso-2,6-diaminopimeloyl-D-alanyl-D-alanine + UDP-N-acetyl-alpha-D-glucosamine = di-trans,octa-cis-undecaprenyl diphospho-[N-acetyl-alpha-D-glucosaminyl-(1-&gt;4)]-N-acetyl-alpha-D-muramoyl-L-alanyl-D-glutamyl-meso-2,6-diaminopimeloyl-D-alanyl-D-alanine + UDP + H(+). It participates in cell wall biogenesis; peptidoglycan biosynthesis. Its function is as follows. Cell wall formation. Catalyzes the transfer of a GlcNAc subunit on undecaprenyl-pyrophosphoryl-MurNAc-pentapeptide (lipid intermediate I) to form undecaprenyl-pyrophosphoryl-MurNAc-(pentapeptide)GlcNAc (lipid intermediate II). This chain is UDP-N-acetylglucosamine--N-acetylmuramyl-(pentapeptide) pyrophosphoryl-undecaprenol N-acetylglucosamine transferase, found in Nitrobacter winogradskyi (strain ATCC 25391 / DSM 10237 / CIP 104748 / NCIMB 11846 / Nb-255).